The following is a 646-amino-acid chain: Epithelial sodium channel subunit beta-2 (646 aa).

Over 1-57 (MIQGKLKRLKRYFTRALHRIQKGPGYTYKELLVWFCDNTNTHGPKRIIKEGPKKRVM) the chain is Cytoplasmic. Residues 58 to 78 (WFILTLVFAGLVFWQWGLLIL) traverse the membrane as a helical segment. The Extracellular portion of the chain corresponds to 79–551 (TYLSYGVSVS…GGQFGFWMGG (473 aa)). Intrachain disulfides connect cysteine 104/cysteine 290, cysteine 214/cysteine 221, cysteine 267/cysteine 274, cysteine 380/cysteine 467, cysteine 405/cysteine 463, cysteine 409/cysteine 459, cysteine 418/cysteine 445, and cysteine 420/cysteine 434. A helical transmembrane segment spans residues 552–572 (SVLCIIEFGEIIIDCMWITIL). The Cytoplasmic segment spans residues 573–646 (KLLAWIRNRR…IEPVSSDEEN (74 aa)). The segment at 586-646 (QRPQYADPPP…IEPVSSDEEN (61 aa)) is disordered. Basic and acidic residues predominate over residues 610–619 (QHDDGNHVTE).

The protein belongs to the amiloride-sensitive sodium channel (TC 1.A.6) family. SCNN1B subfamily. In terms of assembly, component of the heterotrimeric epithelial sodium channel (ENaC) composed of an alpha/SCNN1A, a beta/SCNN1B and a gamma/SCNN1G subunit.

The protein localises to the apical cell membrane. Its subcellular location is the cytoplasmic vesicle membrane. The catalysed reaction is Na(+)(in) = Na(+)(out). With respect to regulation, originally identified and characterized by its inhibition by the diuretic drug amiloride. This is one of the three pore-forming subunits of the heterotrimeric epithelial sodium channel (ENaC), a critical regulator of sodium balance and fluid homeostasis. ENaC operates in epithelial tissues, where it mediates the electrodiffusion of sodium ions from extracellular fluid through the apical membrane of cells, with water following osmotically. The protein is Epithelial sodium channel subunit beta-2 (scnn1b-b) of Xenopus laevis (African clawed frog).